Here is a 293-residue protein sequence, read N- to C-terminus: ELMO domain-containing protein 2 (293 aa).

The region spanning 126-282 (QHEKMLLKLW…KFHERIKGLL (157 aa)) is the ELMO domain.

Acts as a GTPase-activating protein (GAP) toward guanine nucleotide exchange factors like ARL2, ARL3, ARF1 and ARF6, but not for GTPases outside the Arf family. This chain is ELMO domain-containing protein 2 (Elmod2), found in Mus musculus (Mouse).